A 511-amino-acid chain; its full sequence is Maturase K (511 aa).

Belongs to the intron maturase 2 family. MatK subfamily.

The protein localises to the plastid. Its subcellular location is the chloroplast. In terms of biological role, usually encoded in the trnK tRNA gene intron. Probably assists in splicing its own and other chloroplast group II introns. This is Maturase K from Triticum aestivum (Wheat).